The primary structure comprises 393 residues: Alpha-pyrone synthesis polyketide synthase-like Pks18 (393 aa).

The tract at residues 1 to 26 (MNVSAESGAPRRAGQRHEVGLAQLPP) is disordered. Cys175 (nucleophile) is an active-site residue. His221 contacts substrate.

This sequence belongs to the thiolase-like superfamily. Chalcone/stilbene synthases family. In terms of assembly, homodimer.

It participates in lipid metabolism; fatty acid biosynthesis. Functionally, involved in the biosynthesis of tri- and tetraketide alpha-pyrones. Pks18 catalyzes the extension of medium- and long-chain aliphatic acyl-CoA substrates by using malonyl-CoA as an extender molecule to synthesize polyketide products. The polypeptide is Alpha-pyrone synthesis polyketide synthase-like Pks18 (pks18) (Mycobacterium bovis (strain ATCC BAA-935 / AF2122/97)).